The chain runs to 212 residues: Glycerol-3-phosphate acyltransferase (212 aa).

The next 5 helical transmembrane spans lie at 9-29, 67-87, 95-115, 128-148, and 168-190; these read AACLVPVILTALLLLAIGYLL, GPALVVFLIDVGKGALAVLLA, WLQVLAGLAALAGHIWPVWLG, MFLGLAWPVGLACFGLFMAVI, and LMVVSGGSSAYVVVSLVASLMVL.

This sequence belongs to the PlsY family. As to quaternary structure, probably interacts with PlsX.

The protein localises to the cell inner membrane. The enzyme catalyses an acyl phosphate + sn-glycerol 3-phosphate = a 1-acyl-sn-glycero-3-phosphate + phosphate. Its pathway is lipid metabolism; phospholipid metabolism. Catalyzes the transfer of an acyl group from acyl-phosphate (acyl-PO(4)) to glycerol-3-phosphate (G3P) to form lysophosphatidic acid (LPA). This enzyme utilizes acyl-phosphate as fatty acyl donor, but not acyl-CoA or acyl-ACP. This Parasynechococcus marenigrum (strain WH8102) protein is Glycerol-3-phosphate acyltransferase.